Here is a 119-residue protein sequence, read N- to C-terminus: Transcription and mRNA export factor SUS1 (119 aa).

This sequence belongs to the ENY2 family. As to quaternary structure, component of the nuclear pore complex (NPC)-associated TREX-2 complex (transcription and export complex 2), composed of at least SUS1, SAC3, THP1, SEM1, and CDC31. TREX-2 contains 2 SUS1 chains. The TREX-2 complex interacts with the nucleoporin NUP1. Component of the 1.8 MDa SAGA transcription coactivator-HAT complex. SAGA is built of 5 distinct domains with specialized functions. Within the SAGA complex, SUS1, SGF11, SGF73 and UBP8 form an additional subcomplex of SAGA called the DUB module (deubiquitination module). Interacts directly with THP1, SAC3, SGF11, and with the RNA polymerase II.

It localises to the nucleus. The protein resides in the nucleoplasm. Its subcellular location is the cytoplasm. The protein localises to the P-body. Involved in mRNA export coupled transcription activation by association with both the TREX-2 and the SAGA complexes. At the promoters, SAGA is required for recruitment of the basal transcription machinery. It influences RNA polymerase II transcriptional activity through different activities such as TBP interaction and promoter selectivity, interaction with transcription activators, and chromatin modification through histone acetylation and deubiquitination. Within the SAGA complex, participates in a subcomplex required for deubiquitination of H2B and for the maintenance of steady-state H3 methylation levels. The TREX-2 complex functions in docking export-competent ribonucleoprotein particles (mRNPs) to the nuclear entrance of the nuclear pore complex (nuclear basket). TREX-2 participates in mRNA export and accurate chromatin positioning in the nucleus by tethering genes to the nuclear periphery. May also be involved in cytoplasmic mRNA decay by interaction with components of P-bodies. The polypeptide is Transcription and mRNA export factor SUS1 (Candida albicans (strain SC5314 / ATCC MYA-2876) (Yeast)).